A 105-amino-acid chain; its full sequence is Thioredoxin (105 aa).

Residues 2–105 (VKQIESKSAF…KLEATINELL (104 aa)) form the Thioredoxin domain. Residue lysine 3 is modified to N6-acetyllysine. Lysine 8 carries the post-translational modification N6-succinyllysine. Residues cysteine 32 and cysteine 35 each act as nucleophile in the active site. A disulfide bond links cysteine 32 and cysteine 35. Lysine 39 is modified (N6-acetyllysine). An S-nitrosocysteine mark is found at cysteine 62 and cysteine 69. Cysteine 73 carries the post-translational modification S-nitrosocysteine; alternate. N6-acetyllysine; alternate is present on lysine 94. Lysine 94 carries the N6-succinyllysine; alternate modification.

Belongs to the thioredoxin family. As to quaternary structure, homodimer; disulfide-linked. Interacts with TXNIP through the redox-active site. Interacts with MAP3K5 and CASP3. Interacts with APEX1; the interaction stimulates the FOS/JUN AP-1 DNA-binding activity in a redox-dependent manner. In terms of processing, in the fully reduced protein, both Cys-69 and Cys-73 are nitrosylated in response to nitric oxide (NO). When two disulfide bonds are present in the protein, only Cys-73 is nitrosylated. Cys-73 can serve as donor for nitrosylation of target proteins.

It is found in the nucleus. Its subcellular location is the cytoplasm. The protein localises to the secreted. Functionally, participates in various redox reactions through the reversible oxidation of its active center dithiol to a disulfide and catalyzes dithiol-disulfide exchange reactions. Plays a role in the reversible S-nitrosylation of cysteine residues in target proteins, and thereby contributes to the response to intracellular nitric oxide. Nitrosylates the active site Cys of CASP3 in response to nitric oxide (NO), and thereby inhibits caspase-3 activity. Induces the FOS/JUN AP-1 DNA binding activity in ionizing radiation (IR) cells through its oxidation/reduction status and stimulates AP-1 transcriptional activity. This chain is Thioredoxin (TXN), found in Oryctolagus cuniculus (Rabbit).